The primary structure comprises 574 residues: Meiotically up-regulated gene 72 protein (574 aa).

Residues 339–374 form a disordered region; the sequence is VRAGTPQSSPNFNPAMRRSPVGAASRSPSRSTIGIS. T343 carries the post-translational modification Phosphothreonine. A compositionally biased stretch (polar residues) spans 364-374; sequence RSPSRSTIGIS. At S392 the chain carries Phosphoserine. Disordered stretches follow at residues 422-451 and 495-574; these read TSPS…NKAG and RNRR…RRMD. The span at 541–554 shows a compositional bias: polar residues; that stretch reads LYDTSRYPTRNSKP.

Its subcellular location is the cytoplasm. Has a role in meiosis. The sequence is that of Meiotically up-regulated gene 72 protein (mug72) from Schizosaccharomyces pombe (strain 972 / ATCC 24843) (Fission yeast).